We begin with the raw amino-acid sequence, 271 residues long: 3-methyl-2-oxobutanoate hydroxymethyltransferase (271 aa).

The Mg(2+) site is built by Asp51 and Asp90. Residues 51 to 52 (DS), Asp90, and Lys118 each bind 3-methyl-2-oxobutanoate. Glu120 contacts Mg(2+). Glu186 (proton acceptor) is an active-site residue.

It belongs to the PanB family. In terms of assembly, homodecamer; pentamer of dimers. Requires Mg(2+) as cofactor.

Its subcellular location is the cytoplasm. It carries out the reaction 3-methyl-2-oxobutanoate + (6R)-5,10-methylene-5,6,7,8-tetrahydrofolate + H2O = 2-dehydropantoate + (6S)-5,6,7,8-tetrahydrofolate. Its pathway is cofactor biosynthesis; (R)-pantothenate biosynthesis; (R)-pantoate from 3-methyl-2-oxobutanoate: step 1/2. In terms of biological role, catalyzes the reversible reaction in which hydroxymethyl group from 5,10-methylenetetrahydrofolate is transferred onto alpha-ketoisovalerate to form ketopantoate. The chain is 3-methyl-2-oxobutanoate hydroxymethyltransferase from Stenotrophomonas maltophilia (strain R551-3).